Reading from the N-terminus, the 103-residue chain is Small ribosomal subunit protein uS10 (103 aa).

It belongs to the universal ribosomal protein uS10 family. Part of the 30S ribosomal subunit.

In terms of biological role, involved in the binding of tRNA to the ribosomes. This chain is Small ribosomal subunit protein uS10, found in Pseudoalteromonas atlantica (strain T6c / ATCC BAA-1087).